Here is a 228-residue protein sequence, read N- to C-terminus: Ribulose-phosphate 3-epimerase (228 aa).

S9 lines the substrate pocket. H34, D36, H68, and D177 together coordinate a divalent metal cation. D36 serves as the catalytic Proton acceptor. Substrate-binding positions include H68, 177 to 179, and 199 to 200; these read DGG and GS. D177 (proton donor) is an active-site residue.

This sequence belongs to the ribulose-phosphate 3-epimerase family. A divalent metal cation is required as a cofactor.

The catalysed reaction is D-ribulose 5-phosphate = D-xylulose 5-phosphate. It functions in the pathway carbohydrate degradation. Functionally, catalyzes the reversible epimerization of D-ribulose 5-phosphate to D-xylulose 5-phosphate. The protein is Ribulose-phosphate 3-epimerase of Buchnera aphidicola subsp. Schizaphis graminum (strain Sg).